Reading from the N-terminus, the 32-residue chain is Photosystem II reaction center protein T (32 aa).

A helical transmembrane segment spans residues 3–23 (TLVYTFLLIGTLAVLFAAVFF).

Belongs to the PsbT family. In terms of assembly, PSII is composed of 1 copy each of membrane proteins PsbA, PsbB, PsbC, PsbD, PsbE, PsbF, PsbH, PsbI, PsbJ, PsbK, PsbL, PsbM, PsbT, PsbX, PsbY, PsbZ, Psb30/Ycf12, at least 3 peripheral proteins of the oxygen-evolving complex and a large number of cofactors. It forms dimeric complexes.

Its subcellular location is the plastid. The protein resides in the chloroplast thylakoid membrane. Functionally, found at the monomer-monomer interface of the photosystem II (PS II) dimer, plays a role in assembly and dimerization of PSII. PSII is a light-driven water plastoquinone oxidoreductase, using light energy to abstract electrons from H(2)O, generating a proton gradient subsequently used for ATP formation. The sequence is that of Photosystem II reaction center protein T from Guillardia theta (Cryptophyte).